The following is a 283-amino-acid chain: Tumor necrosis factor receptor superfamily member 14 (283 aa).

Positions 1 to 38 (MEPPGDWGPPPWRSTPKTDVLRLVLYLTFLGAPCYAPA) are cleaved as a signal peptide. At 39-202 (LPSCKEDEYP…GAGTSSSHWV (164 aa)) the chain is on the extracellular side. 8 disulfides stabilise this stretch: C42/C53, C54/C67, C57/C75, C78/C93, C96/C111, C99/C119, C121/C138, and C127/C135. 3 TNFR-Cys repeats span residues 42 to 75 (CKED…GTVC), 78 to 119 (CPPG…NAVC), and 121 to 162 (CSPG…DTLC). An N-linked (GlcNAc...) asparagine glycan is attached at N110. N173 carries an N-linked (GlcNAc...) asparagine glycan. A helical membrane pass occupies residues 203-223 (WWFLSGSLVIVIVCSTVGLII). Topologically, residues 224–283 (CVKRRKPRGDVVKVIVSVQRKRQEAEGEATVIEALQAPPDVTTVAVEETIPSFTGRSPNH) are cytoplasmic. S240 bears the Phosphoserine mark.

Belongs to the tumor necrosis factor receptor superfamily. In terms of assembly, interacts with TRAF2, TRAF3 and TRAF5. Interacts (via CRD1/TNFR-Cys 1) with CD160; this interaction is direct. Interacts with LTA and TNFSF14. Interacts (via CRD1/TNFR-Cys 1) in cis and trans with BTLA; the cis interactions inhibits the trans interactions. As to quaternary structure, (Microbial infection) Interacts with herpes simplex virus 1/HHV-1 envelope glycoprotein D. (Microbial infection) Interacts with herpes simplex virus 2/HHV-2 envelope glycoprotein D. In terms of processing, N-glycosylated. As to expression, widely expressed, with the highest expression in lung, spleen and thymus. Expressed in a subpopulation of B cells and monocytes. Expressed in naive T cells.

The protein localises to the cell membrane. Receptor for four distinct ligands: The TNF superfamily members TNFSF14/LIGHT and homotrimeric LTA/lymphotoxin-alpha and the immunoglobulin superfamily members BTLA and CD160, altogether defining a complex stimulatory and inhibitory signaling network. Signals via the TRAF2-TRAF3 E3 ligase pathway to promote immune cell survival and differentiation. Participates in bidirectional cell-cell contact signaling between antigen presenting cells and lymphocytes. In response to ligation of TNFSF14/LIGHT, delivers costimulatory signals to T cells, promoting cell proliferation and effector functions. Interacts with CD160 on NK cells, enhancing IFNG production and anti-tumor immune response. In the context of bacterial infection, acts as a signaling receptor on epithelial cells for CD160 from intraepithelial lymphocytes, triggering the production of antimicrobial proteins and pro-inflammatory cytokines. Upon binding to CD160 on activated CD4+ T cells, down-regulates CD28 costimulatory signaling, restricting memory and alloantigen-specific immune response. May interact in cis (on the same cell) or in trans (on other cells) with BTLA. In cis interactions, appears to play an immune regulatory role inhibiting in trans interactions in naive T cells to maintain a resting state. In trans interactions, can predominate during adaptive immune response to provide survival signals to effector T cells. Its function is as follows. (Microbial infection) Acts as a receptor for Herpes simplex virus 1/HHV-1. In terms of biological role, (Microbial infection) Acts as a receptor for Herpes simplex virus 2/HHV-2. This chain is Tumor necrosis factor receptor superfamily member 14, found in Homo sapiens (Human).